The chain runs to 771 residues: Probable exo-1,4-beta-xylosidase bxlB (771 aa).

The first 25 residues, 1-25 (MAHITSWHYGNAIALLVSLAPGALS), serve as a signal peptide directing secretion. Asn-67 carries N-linked (GlcNAc...) asparagine glycosylation. Asp-293 is an active-site residue. Asn-305, Asn-345, Asn-423, and Asn-464 each carry an N-linked (GlcNAc...) asparagine glycan.

This sequence belongs to the glycosyl hydrolase 3 family.

It is found in the secreted. It carries out the reaction Hydrolysis of (1-&gt;4)-beta-D-xylans, to remove successive D-xylose residues from the non-reducing termini.. Its pathway is glycan degradation; xylan degradation. Its function is as follows. Xylan 1,4-beta-xylosidase involved in the hydrolysis of xylan, a major structural heterogeneous polysaccharide found in plant biomass representing the second most abundant polysaccharide in the biosphere, after cellulose. The protein is Probable exo-1,4-beta-xylosidase bxlB (bxlB) of Aspergillus fumigatus (strain CBS 144.89 / FGSC A1163 / CEA10) (Neosartorya fumigata).